A 353-amino-acid polypeptide reads, in one-letter code: Aliphatic aldoxime dehydratase (353 aa).

S219 is an an aliphatic aldoxime binding site. Residue H299 coordinates heme b. Residue H320 participates in an aliphatic aldoxime binding. H320 is a catalytic residue.

The protein belongs to the heme-containing dehydratase family. In terms of assembly, homodimer. It depends on heme b as a cofactor.

It catalyses the reaction an aliphatic aldoxime = a nitrile + H2O. Its activity is regulated as follows. Active when the heme iron is in the ferrous state. Activated by FMN, Fe(2+), Sn(2+), Na(2)SO(3), Na(2)S and vitamin K3. Its function is as follows. Catalyzes the dehydration of aldoximes to their corresponding nitrile. Is active toward various arylalkyl- and alkyl-aldoximes, and to a lesser extent toward aryl-aldoximes. The protein is Aliphatic aldoxime dehydratase of Rhodococcus globerulus.